Reading from the N-terminus, the 451-residue chain is Exodeoxyribonuclease 7 large subunit (451 aa).

This sequence belongs to the XseA family. In terms of assembly, heterooligomer composed of large and small subunits.

Its subcellular location is the cytoplasm. The enzyme catalyses Exonucleolytic cleavage in either 5'- to 3'- or 3'- to 5'-direction to yield nucleoside 5'-phosphates.. Functionally, bidirectionally degrades single-stranded DNA into large acid-insoluble oligonucleotides, which are then degraded further into small acid-soluble oligonucleotides. The chain is Exodeoxyribonuclease 7 large subunit from Neisseria meningitidis serogroup A / serotype 4A (strain DSM 15465 / Z2491).